Reading from the N-terminus, the 121-residue chain is Small ribosomal subunit protein uS13 (121 aa).

The segment at Val-97–Lys-121 is disordered. The span at Gln-100 to Lys-121 shows a compositional bias: basic residues.

It belongs to the universal ribosomal protein uS13 family. Part of the 30S ribosomal subunit. Forms a loose heterodimer with protein S19. Forms two bridges to the 50S subunit in the 70S ribosome.

Its function is as follows. Located at the top of the head of the 30S subunit, it contacts several helices of the 16S rRNA. In the 70S ribosome it contacts the 23S rRNA (bridge B1a) and protein L5 of the 50S subunit (bridge B1b), connecting the 2 subunits; these bridges are implicated in subunit movement. Contacts the tRNAs in the A and P-sites. The polypeptide is Small ribosomal subunit protein uS13 (Prochlorococcus marinus (strain NATL2A)).